Here is a 169-residue protein sequence, read N- to C-terminus: MSTCGDNSKIFQDIQNFIQDYDLNKDYSVTSSEIYQSFLKKMNGDSLKASQAAGVLCSTVDMDNDGKFSYYEISKYCADQAKKQIEQNAETAALADVEALLLRLDKDKDKKLNKTEFVKFFKEQGYNPYSDPDYVLKIIDLDKDGYVSASELQEWFKQKRLAYARGPIC.

EF-hand domains lie at 9 to 44, 60 to 83, 92 to 127, and 133 to 162; these read KIFQ…KMNG, VDMD…QAKK, AALA…QGYN, and DYVL…KRLA. Positions 105, 107, 109, 111, 116, 140, 142, 144, 146, and 151 each coordinate Ca(2+).

This is Calcium-binding protein G (cbpG) from Dictyostelium discoideum (Social amoeba).